Consider the following 448-residue polypeptide: Glutamyl-tRNA reductase (448 aa).

Substrate contacts are provided by residues 48–51 (TCNR), serine 100, 105–107 (EDQ), and glutamine 111. Catalysis depends on cysteine 49, which acts as the Nucleophile. 180–185 (GAGEIG) is a binding site for NADP(+).

The protein belongs to the glutamyl-tRNA reductase family. In terms of assembly, homodimer.

The catalysed reaction is (S)-4-amino-5-oxopentanoate + tRNA(Glu) + NADP(+) = L-glutamyl-tRNA(Glu) + NADPH + H(+). It participates in porphyrin-containing compound metabolism; protoporphyrin-IX biosynthesis; 5-aminolevulinate from L-glutamyl-tRNA(Glu): step 1/2. In terms of biological role, catalyzes the NADPH-dependent reduction of glutamyl-tRNA(Glu) to glutamate 1-semialdehyde (GSA). The protein is Glutamyl-tRNA reductase of Methanosarcina mazei (strain ATCC BAA-159 / DSM 3647 / Goe1 / Go1 / JCM 11833 / OCM 88) (Methanosarcina frisia).